Consider the following 302-residue polypeptide: Sulfate adenylyltransferase subunit 2 (302 aa).

It belongs to the PAPS reductase family. CysD subfamily. In terms of assembly, heterodimer composed of CysD, the smaller subunit, and CysN.

It carries out the reaction sulfate + ATP + H(+) = adenosine 5'-phosphosulfate + diphosphate. It participates in sulfur metabolism; hydrogen sulfide biosynthesis; sulfite from sulfate: step 1/3. With CysN forms the ATP sulfurylase (ATPS) that catalyzes the adenylation of sulfate producing adenosine 5'-phosphosulfate (APS) and diphosphate, the first enzymatic step in sulfur assimilation pathway. APS synthesis involves the formation of a high-energy phosphoric-sulfuric acid anhydride bond driven by GTP hydrolysis by CysN coupled to ATP hydrolysis by CysD. The sequence is that of Sulfate adenylyltransferase subunit 2 from Baumannia cicadellinicola subsp. Homalodisca coagulata.